The chain runs to 164 residues: Putative 4-hydroxy-4-methyl-2-oxoglutarate aldolase (164 aa).

Substrate is bound by residues Gly80–Leu83 and Arg102. Asp103 contributes to the a divalent metal cation binding site.

Belongs to the class II aldolase/RraA-like family. In terms of assembly, homotrimer. A divalent metal cation serves as cofactor.

It carries out the reaction 4-hydroxy-4-methyl-2-oxoglutarate = 2 pyruvate. It catalyses the reaction oxaloacetate + H(+) = pyruvate + CO2. Functionally, catalyzes the aldol cleavage of 4-hydroxy-4-methyl-2-oxoglutarate (HMG) into 2 molecules of pyruvate. Also contains a secondary oxaloacetate (OAA) decarboxylase activity due to the common pyruvate enolate transition state formed following C-C bond cleavage in the retro-aldol and decarboxylation reactions. This is Putative 4-hydroxy-4-methyl-2-oxoglutarate aldolase from Paraburkholderia phytofirmans (strain DSM 17436 / LMG 22146 / PsJN) (Burkholderia phytofirmans).